We begin with the raw amino-acid sequence, 250 residues long: Hydroxyacylglutathione hydrolase (250 aa).

Zn(2+) contacts are provided by His53, His55, Asp57, His58, His110, Asp127, and His165.

Belongs to the metallo-beta-lactamase superfamily. Glyoxalase II family. Monomer. Zn(2+) is required as a cofactor.

The enzyme catalyses an S-(2-hydroxyacyl)glutathione + H2O = a 2-hydroxy carboxylate + glutathione + H(+). It participates in secondary metabolite metabolism; methylglyoxal degradation; (R)-lactate from methylglyoxal: step 2/2. In terms of biological role, thiolesterase that catalyzes the hydrolysis of S-D-lactoyl-glutathione to form glutathione and D-lactic acid. The polypeptide is Hydroxyacylglutathione hydrolase (Photorhabdus laumondii subsp. laumondii (strain DSM 15139 / CIP 105565 / TT01) (Photorhabdus luminescens subsp. laumondii)).